The sequence spans 486 residues: Bifunctional protein HldE (486 aa).

The tract at residues 1-331 (MAEHDDGDLI…VDAVKPASGA (331 aa)) is ribokinase. 208 to 211 (NRRE) provides a ligand contact to ATP. Asp-277 is an active-site residue. The interval 357-486 (FTNGCFDLLH…TTATVTRLRS (130 aa)) is cytidylyltransferase.

The protein in the N-terminal section; belongs to the carbohydrate kinase PfkB family. In the C-terminal section; belongs to the cytidylyltransferase family. In terms of assembly, homodimer.

It carries out the reaction D-glycero-beta-D-manno-heptose 7-phosphate + ATP = D-glycero-beta-D-manno-heptose 1,7-bisphosphate + ADP + H(+). It catalyses the reaction D-glycero-beta-D-manno-heptose 1-phosphate + ATP + H(+) = ADP-D-glycero-beta-D-manno-heptose + diphosphate. Its pathway is nucleotide-sugar biosynthesis; ADP-L-glycero-beta-D-manno-heptose biosynthesis; ADP-L-glycero-beta-D-manno-heptose from D-glycero-beta-D-manno-heptose 7-phosphate: step 1/4. It functions in the pathway nucleotide-sugar biosynthesis; ADP-L-glycero-beta-D-manno-heptose biosynthesis; ADP-L-glycero-beta-D-manno-heptose from D-glycero-beta-D-manno-heptose 7-phosphate: step 3/4. Its function is as follows. Catalyzes the phosphorylation of D-glycero-D-manno-heptose 7-phosphate at the C-1 position to selectively form D-glycero-beta-D-manno-heptose-1,7-bisphosphate. Catalyzes the ADP transfer from ATP to D-glycero-beta-D-manno-heptose 1-phosphate, yielding ADP-D-glycero-beta-D-manno-heptose. This is Bifunctional protein HldE from Acidiphilium cryptum (strain JF-5).